The following is a 207-amino-acid chain: Guanylate kinase (207 aa).

In terms of domain architecture, Guanylate kinase-like spans 5–184 (GNLFIVSAPS…ALADLRAIIR (180 aa)). 12–19 (APSGAGKS) provides a ligand contact to ATP.

It belongs to the guanylate kinase family.

It localises to the cytoplasm. It catalyses the reaction GMP + ATP = GDP + ADP. Functionally, essential for recycling GMP and indirectly, cGMP. In Shewanella sp. (strain MR-7), this protein is Guanylate kinase.